Reading from the N-terminus, the 102-residue chain is Small ribosomal subunit protein uS10 (102 aa).

The protein belongs to the universal ribosomal protein uS10 family. As to quaternary structure, part of the 30S ribosomal subunit.

Involved in the binding of tRNA to the ribosomes. This is Small ribosomal subunit protein uS10 from Nitrosopumilus maritimus (strain SCM1).